The primary structure comprises 1060 residues: MILVIAEKPNVARKIAMALAEVKPIKKTLFGVPYYELIRDGKRLIVASAVGHLYGLAPKNDFFGYPIFDVEWVPVYIAEKGKEYAKDYIKLLSVLSKRVREFIVACDYDTEGEVIGYTALKYACGVDPGVAKRMKFSALTKRDLIKAWYNLEPTINFGMANAGIARHILDWYWGVNLSRALTHAIKRASGKWVVLSTGRVQGPTLKFLVDREREIQSFVPQPYWVIKLIFEKNGKKYTANYEKDKIWDENEAKRIVLEVKKAPARVTNIEVKQQNRNPPVPFDLGTLQREAYSAFGFSPKKTLDIAQSLYEKGFCLHPDTLILTSQGVRKIKELSREGEVFALDFNLKLSKAKYRLLERDADEQMYKVTLLDGTELYLTADHPVLVYREGNLAFVPADKLRETDHVVLVLNKSARDNYGFLDLLLEITDSQEDYAILENGETLSLHSLKMLVERGEIKDIAVVGFSHNNFGKVMLRDELWYLIGYLAGKGGEIKGNGVVISSRTKEIVGLTKSLNIDLIETEEGIVLSNKSFVRLLHLIHYTPRVPEVYGIINNTEWLKAFLAGYYDATLLEGLTLEALYKIKVYLQLLGIRAKIEDNKLKVHLEDLQRFRELLGKFSRRKLYVETSQVPVFTDFDERSYDFPRILGGDIYIIGIKSIEKFHYKGKVYDLVVENYHNFIANGIAVHNCSYPRTESQKLPKNLNYKFIIQNLARIPEYRPYAHLLLGMPELKPVEGKKEDPAHPAIYPTGEIPRPGDLTKDEALLYDMIVRRFLAVFMEPAVRETVKVTISAGKHKFFISGGRTVKEGWLRVYGKYVKFDEVTLPTFFIGERIKVLQVKREKKKTKPPARYSPAAVIKKMEDLGLGTKATRAQILETLYQRGYIEGKKSIKVTPLGMKVIETLEKYVPEIISVELTREFEKKMELIMEGKLTKEEVIEEAKIRLTKILEEFKKKELEIGLELAKIVVGEEKPPLIVGKCPKCGGDLIVKYNEKTGKRFVGCSNWPKCNVTYPILQRGEIIPTNKTCCNGAPVVIIREKDGREWEICLDMNCKEYNTIKKKR.

Positions 1 to 141 (MILVIAEKPN…KRMKFSALTK (141 aa)) constitute a Toprim domain. The Mg(2+) site is built by E7 and D107. One can recognise a Topo IA-type catalytic domain in the interval 156 to 947 (NFGMANAGIA…EAKIRLTKIL (792 aa)). The tract at residues 196-201 (STGRVQ) is interaction with DNA. Residues 482–591 (LIGYLAGKGG…IKVYLQLLGI (110 aa)) enclose the DOD-type homing endonuclease domain. Y690 (O-(5'-phospho-DNA)-tyrosine intermediate) is an active-site residue. The C4-type 1 zinc-finger motif lies at 978-1006 (CPKCGGDLIVKYNEKTGKRFVGCSNWPKC). A C4-type 2; atypical zinc finger spans residues 1025 to 1050 (CCNGAPVVIIREKDGREWEICLDMNC).

This sequence belongs to the type IA topoisomerase family. Monomer. Mg(2+) serves as cofactor. Post-translationally, this protein undergoes a protein self splicing that involves a post-translational excision of the intervening region (intein) followed by peptide ligation.

The enzyme catalyses ATP-independent breakage of single-stranded DNA, followed by passage and rejoining.. Functionally, releases the supercoiling and torsional tension of DNA, which is introduced during the DNA replication and transcription, by transiently cleaving and rejoining one strand of the DNA duplex. Introduces a single-strand break via transesterification at a target site in duplex DNA. The scissile phosphodiester is attacked by the catalytic tyrosine of the enzyme, resulting in the formation of a DNA-(5'-phosphotyrosyl)-enzyme intermediate and the expulsion of a 3'-OH DNA strand. The free DNA strand then undergoes passage around the unbroken strand, thus removing DNA supercoils. Finally, in the religation step, the DNA 3'-OH attacks the covalent intermediate to expel the active-site tyrosine and restore the DNA phosphodiester backbone. This is DNA topoisomerase 1 (topA) from Pyrococcus furiosus (strain ATCC 43587 / DSM 3638 / JCM 8422 / Vc1).